Reading from the N-terminus, the 459-residue chain is 5-hydroxytryptamine receptor 2C (459 aa).

The N-terminal stretch at 1–32 is a signal peptide; it reads MVNLGTAVRSLLVHLIGLLVWQFDISISPVAA. Over 33 to 56 the chain is Extracellular; it reads IVTDTFNSSDGGRLFQFPDGVQNW. The chain crosses the membrane as a helical span at residues 57-81; the sequence is PALSIVVIIIMTIGGNILVIMAVSM. The Cytoplasmic portion of the chain corresponds to 82-87; the sequence is EKKLHN. The helical transmembrane segment at 88–112 threads the bilayer; sequence ATNYFLMSLAIADMLVGLLVMPLSL. The Extracellular segment spans residues 113 to 129; it reads LAILYDYVWPLPRYLCP. Residues Cys-128 and Cys-208 are joined by a disulfide bond. A helical membrane pass occupies residues 130–152; sequence VWISLDVLFSTASIMHLCAISLD. An ergotamine-binding site is contributed by Thr-140. A DRY motif; important for ligand-induced conformation changes motif is present at residues 152 to 154; sequence DRY. Residues 153-168 are Cytoplasmic-facing; it reads RYVAIRNPIEHSRFNS. Residues 169–190 form a helical membrane-spanning segment; that stretch reads RTKAIMKIAIVWAISIGVSVPI. At 191–214 the chain is on the extracellular side; it reads PVIGLRDESKVFVNNTTCVLNDPN. N-linked (GlcNAc...) asparagine glycans are attached at residues Asn-204 and Asn-205. Leu-210 is an ergotamine binding site. The helical transmembrane segment at 215-237 threads the bilayer; sequence FVLIGSFVAFFIPLTIMVITYFL. The Cytoplasmic segment spans residues 238-312; that stretch reads TIYVLRRQTL…AINNEKKASK (75 aa). The segment at 274-302 is disordered; that stretch reads DEEENAPNPNPDQKPRRKKKEKRPRGTMQ. Positions 288 to 298 are enriched in basic residues; that stretch reads PRRKKKEKRPR. A helical transmembrane segment spans residues 313-337; sequence VLGIVFFVFLIMWCPFFITNILSVL. An intrachain disulfide couples Cys-338 to Cys-342. Residues 338–348 lie on the Extracellular side of the membrane; it reads CGKACNQKLME. A helical membrane pass occupies residues 349 to 371; it reads KLLNVFVWIGYVCSGINPLVYTL. The short motif at 365–369 is the NPxxY motif; important for ligand-induced conformation changes and signaling element; sequence NPLVY. Topologically, residues 372–459 are cytoplasmic; sequence FNKIYRRAFS…NVVSERISSV (88 aa). The PDZ-binding signature appears at 457 to 459; sequence SSV.

It belongs to the G-protein coupled receptor 1 family. In terms of assembly, interacts with MPDZ. Interacts with ARRB2. Interacts with MPP3; this interaction stabilizes the receptor at the plasma membrane and prevents the desensitization of the HTR2C receptor-mediated calcium response. Detected in brain cortex, hypothalamus, brainstem and arcuate nucleus. Detected in the paraventricular nucleus of the hypothalamus.

Its subcellular location is the cell membrane. In terms of biological role, G-protein coupled receptor for 5-hydroxytryptamine (serotonin). Also functions as a receptor for various drugs and psychoactive substances, including ergot alkaloid derivatives, 1-2,5,-dimethoxy-4-iodophenyl-2-aminopropane (DOI) and lysergic acid diethylamide (LSD). Ligand binding causes a conformation change that triggers signaling via guanine nucleotide-binding proteins (G proteins) and modulates the activity of downstream effectors. HTR2C is coupled to G(q)/G(11) G alpha proteins and activates phospholipase C-beta, releasing diacylglycerol (DAG) and inositol 1,4,5-trisphosphate (IP3) second messengers that modulate the activity of phosphatidylinositol 3-kinase and promote the release of Ca(2+) ions from intracellular stores, respectively. Beta-arrestin family members inhibit signaling via G proteins and mediate activation of alternative signaling pathways. Regulates neuronal activity via the activation of short transient receptor potential calcium channels in the brain, and thereby modulates the activation of pro-opiomelanocortin neurons and the release of CRH that then regulates the release of corticosterone. Plays a role in the regulation of appetite and eating behavior, responses to anxiogenic stimuli and stress. Plays a role in insulin sensitivity and glucose homeostasis. The chain is 5-hydroxytryptamine receptor 2C from Mus musculus (Mouse).